The chain runs to 530 residues: Sensor protein kinase PilS (530 aa).

The next 6 membrane-spanning stretches (helical) occupy residues 25–37 (LTIGLVLVLLISS), 57–70 (WCYLVFNILVALFL), 76–98 (LLPIFILALTDVLMLCGLFYAGG), 101–119 (PSGIGSLLVVAVAIANILL), 124–144 (GLVIAAAASLGLLYLTFFLSL), and 156–174 (AGGLGTLCFAAALVIQALV). Topologically, residues 175–530 (RRQEQTETLA…ITFAHPRKLS (356 aa)) are cytoplasmic. The region spanning 196–260 (ELNALILQRM…KQWRLNPSLR (65 aa)) is the PAS domain. Residues 316 to 527 (GIAHEIRNPL…CFRITFAHPR (212 aa)) form the Histidine kinase domain. Histidine 319 is subject to Phosphohistidine; by autocatalysis.

As to quaternary structure, interacts with PilA.

Its subcellular location is the cell inner membrane. It carries out the reaction ATP + protein L-histidine = ADP + protein N-phospho-L-histidine.. Member of the two-component regulatory system PilS/PilR that regulates the expression of multiple genes including the type IV pilus (T4P) major subunit PilA. Thereby, plays a major role in the regulation of multiple motility pathways. Functions as a membrane-associated protein kinase that phosphorylates PilR in response to environmental signals leading to activation of specific gene promoters including the pilin gene. This Pseudomonas aeruginosa (strain ATCC 15692 / DSM 22644 / CIP 104116 / JCM 14847 / LMG 12228 / 1C / PRS 101 / PAO1) protein is Sensor protein kinase PilS (pilS).